Here is a 678-residue protein sequence, read N- to C-terminus: Protein MALE DISCOVERER 2 (678 aa).

Positions 1–25 (MMGCGFHFPWFFFLIIGLQAPLSLS) are cleaved as a signal peptide. The Extracellular portion of the chain corresponds to 26–323 (LTSQGSALLK…SKGSKHVWLY (298 aa)). Residue Asn-52 is glycosylated (N-linked (GlcNAc...) asparagine). LRR repeat units follow at residues 71–94 (KVQI…SQLS), 95–117 (DLRS…YGSF), 119–141 (NLEV…LSNG), and 143–164 (SLKH…KIVR). A disordered region spans residues 247–314 (LAAEPAPSAP…KNQPQDNKQS (68 aa)). A compositionally biased stretch (polar residues) spans 296–311 (KGSTSPDISKNQPQDN). A helical membrane pass occupies residues 324 to 344 (VVIAVASFVGLLIIVAVIFFC). Residues 345–678 (RKRAVKSIGP…ELEILSSEAT (334 aa)) are Cytoplasmic-facing. One can recognise a Protein kinase domain in the interval 346-651 (KRAVKSIGPW…DVAEQLKQVI (306 aa)).

The protein belongs to the protein kinase superfamily. Ser/Thr protein kinase family. Expressed in pollen tubes and seedlings.

The protein localises to the endomembrane system. The catalysed reaction is L-seryl-[protein] + ATP = O-phospho-L-seryl-[protein] + ADP + H(+). The enzyme catalyses L-threonyl-[protein] + ATP = O-phospho-L-threonyl-[protein] + ADP + H(+). Functionally, involved in the pollen tube perception of the female signal by binding an unidentified female attractant. May be involved in the regulation of root hairs development. This Arabidopsis thaliana (Mouse-ear cress) protein is Protein MALE DISCOVERER 2 (MDIS2).